The chain runs to 992 residues: Vacuolar membrane protease (992 aa).

Residues 1–24 lie on the Cytoplasmic side of the membrane; sequence MSPAMANPRVRKFNPIAFTPLPVT. Residues 25 to 45 form a helical membrane-spanning segment; that stretch reads FITTIVYLAVLILVLVTYLVV. At 46–390 the chain is on the vacuolar side; that stretch reads PPAPTLEMSP…SAFAVFRLHT (345 aa). N-linked (GlcNAc...) asparagine glycans are attached at residues Asn-59, Asn-115, and Asn-118. His-174 and Asp-186 together coordinate Zn(2+). The active-site Proton acceptor is the Glu-220. Glu-221 is a Zn(2+) binding site. Asn-237 carries an N-linked (GlcNAc...) asparagine glycan. 2 residues coordinate Zn(2+): Glu-246 and His-319. The helical transmembrane segment at 391–411 threads the bilayer; that stretch reads LFALSVTLLVIGPLVLFITSI. The Cytoplasmic segment spans residues 412-446; that stretch reads ALSKTDRMYLFSMSKSLGGASETVSLRGLRGLFRT. The chain crosses the membrane as a helical span at residues 447 to 467; sequence PIILTVTTVIPIGLAYLLEKI. Residues 468-474 are Vacuolar-facing; the sequence is NPYIVHS. Residues 475–495 form a helical membrane-spanning segment; the sequence is SQFAVWSMMLSVWIFVAWFLA. Topologically, residues 496 to 508 are cytoplasmic; that stretch reads RVADFFRPSALHR. Residues 509 to 529 form a helical membrane-spanning segment; the sequence is AYSYTWIFIVTWIMLVISTVY. The Vacuolar segment spans residues 530-533; sequence ANQK. A helical membrane pass occupies residues 534–554; the sequence is GIAAGYFTFFYFAAVFLATWV. Over 555–671 the chain is Cytoplasmic; it reads SYLELFSLPR…WSWTLPRWTW (117 aa). The disordered stretch occupies residues 579-620; the sequence is RSSSLSSRLLTPSADELPSDIGPNGAENVGDPDETDPTESTS. Residues 672–692 form a helical membrane-spanning segment; the sequence is ILQLLLLAPIVIILVGQVGLL. Topologically, residues 693-708 are vacuolar; the sequence is LTTAMSQIGSDGVSTF. A helical membrane pass occupies residues 709–729; sequence IVYLACALFSTLLFAPLLPFI. Residues 730 to 736 are Cytoplasmic-facing; it reads HRFTYHV. Residues 737 to 757 traverse the membrane as a helical segment; it reads PTFLLLIFIGTLIYNLVAFPF. At 758–992 the chain is on the vacuolar side; it reads SPANRLKIFF…VEASHDFIIQ (235 aa). N-linked (GlcNAc...) asparagine glycosylation is found at Asn-805, Asn-846, and Asn-954.

It belongs to the peptidase M28 family. Requires Zn(2+) as cofactor.

It localises to the vacuole membrane. May be involved in vacuolar sorting and osmoregulation. The chain is Vacuolar membrane protease from Paracoccidioides brasiliensis (strain Pb03).